The sequence spans 418 residues: Enolase 1 (418 aa).

Q162 contributes to the (2R)-2-phosphoglycerate binding site. The active-site Proton donor is E204. D241, E285, and D312 together coordinate Mg(2+). (2R)-2-phosphoglycerate-binding residues include K337, R366, S367, and K388. K337 functions as the Proton acceptor in the catalytic mechanism.

It belongs to the enolase family. The cofactor is Mg(2+).

The protein resides in the cytoplasm. It localises to the secreted. The protein localises to the cell surface. The enzyme catalyses (2R)-2-phosphoglycerate = phosphoenolpyruvate + H2O. It participates in carbohydrate degradation; glycolysis; pyruvate from D-glyceraldehyde 3-phosphate: step 4/5. Catalyzes the reversible conversion of 2-phosphoglycerate (2-PG) into phosphoenolpyruvate (PEP). It is essential for the degradation of carbohydrates via glycolysis. The polypeptide is Enolase 1 (Lactococcus lactis subsp. cremoris (strain SK11)).